We begin with the raw amino-acid sequence, 1472 residues long: Type IV pilus biogenesis factor PilY1 homolog PD_1611 (1472 aa).

Positions 1170, 1172, 1174, 1176, and 1178 each coordinate Ca(2+). Residues 1383–1397 (RGSRSSIGNSDTGAV) are compositionally biased toward polar residues. The disordered stretch occupies residues 1383–1403 (RGSRSSIGNSDTGAVSTGGDA).

The protein belongs to the PilY1 family.

Its subcellular location is the fimbrium. In terms of biological role, one of the three PilY1 homologs of X.fastidiosa, which are involved in bacterial twitching motility as component of the filamentous type IV pili (T4P). The twitching motility of this protein is enhanced by calcium, which may provide the bacterium an adaptive advantage in environments with high calcium concentrations. The chain is Type IV pilus biogenesis factor PilY1 homolog PD_1611 from Xylella fastidiosa (strain Temecula1 / ATCC 700964).